We begin with the raw amino-acid sequence, 177 residues long: Large ribosomal subunit protein uL6 (177 aa).

Belongs to the universal ribosomal protein uL6 family. Part of the 50S ribosomal subunit.

Its function is as follows. This protein binds to the 23S rRNA, and is important in its secondary structure. It is located near the subunit interface in the base of the L7/L12 stalk, and near the tRNA binding site of the peptidyltransferase center. The polypeptide is Large ribosomal subunit protein uL6 (Edwardsiella ictaluri (strain 93-146)).